A 380-amino-acid polypeptide reads, in one-letter code: Cytochrome b (380 aa).

A run of 4 helical transmembrane segments spans residues 33–53 (FGSL…FLAM), 77–98 (WLIR…FIHV), 113–133 (WNIG…GYVL), and 178–198 (FFAF…VHLL). Positions 83 and 97 each coordinate heme b. The heme b site is built by histidine 182 and histidine 196. Histidine 201 provides a ligand contact to a ubiquinone. 4 helical membrane-spanning segments follow: residues 226–246 (IKDL…VLFF), 288–308 (LGGV…PLLN), 320–340 (ITQV…XXXX), and 347–367 (XXXX…IFMP).

The protein belongs to the cytochrome b family. As to quaternary structure, the cytochrome bc1 complex contains 11 subunits: 3 respiratory subunits (MT-CYB, CYC1 and UQCRFS1), 2 core proteins (UQCRC1 and UQCRC2) and 6 low-molecular weight proteins (UQCRH/QCR6, UQCRB/QCR7, UQCRQ/QCR8, UQCR10/QCR9, UQCR11/QCR10 and a cleavage product of UQCRFS1). This cytochrome bc1 complex then forms a dimer. It depends on heme b as a cofactor.

The protein localises to the mitochondrion inner membrane. In terms of biological role, component of the ubiquinol-cytochrome c reductase complex (complex III or cytochrome b-c1 complex) that is part of the mitochondrial respiratory chain. The b-c1 complex mediates electron transfer from ubiquinol to cytochrome c. Contributes to the generation of a proton gradient across the mitochondrial membrane that is then used for ATP synthesis. The sequence is that of Cytochrome b (MT-CYB) from Rhipidomys leucodactylus (White-footed climbing mouse).